A 329-amino-acid chain; its full sequence is Deoxyhypusine hydroxylase (329 aa).

HEAT-like PBS-type repeat units follow at residues 65-91 (LKHE…VLED), 99-124 (RHEA…MRDD), 232-258 (FRHE…ALSN), and 265-292 (VRHE…FLND). Residues histidine 67, glutamate 68, histidine 100, glutamate 101, histidine 234, glutamate 235, histidine 267, and glutamate 268 each coordinate Fe cation.

The protein belongs to the deoxyhypusine hydroxylase family. Requires Fe(2+) as cofactor.

Its subcellular location is the cytoplasm. It localises to the nucleus. The enzyme catalyses [eIF5A protein]-deoxyhypusine + AH2 + O2 = [eIF5A protein]-hypusine + A + H2O. It participates in protein modification; eIF5A hypusination. In terms of biological role, catalyzes the hydroxylation of the N(6)-(4-aminobutyl)-L-lysine intermediate to form hypusine, an essential post-translational modification only found in mature eIF-5A factor. The polypeptide is Deoxyhypusine hydroxylase (Phaeosphaeria nodorum (strain SN15 / ATCC MYA-4574 / FGSC 10173) (Glume blotch fungus)).